Reading from the N-terminus, the 58-residue chain is Potassium channel toxin Ts16 (58 aa).

The N-terminal stretch at 1-16 (MHSSVFILILFSLAVI) is a signal peptide. Cystine bridges form between C29–C51, C34–C47, and C38–C53.

Expressed by the venom gland.

The protein localises to the secreted. Its function is as follows. Blocks potassium channels. This Tityus serrulatus (Brazilian scorpion) protein is Potassium channel toxin Ts16.